The chain runs to 250 residues: Proteasome subunit alpha type-7 (250 aa).

It belongs to the peptidase T1A family. In terms of assembly, the 26S proteasome consists of a 20S proteasome core and two 19S regulatory subunits. The 20S proteasome core is composed of 28 subunits that are arranged in four stacked rings, resulting in a barrel-shaped structure. The two end rings are each formed by seven alpha subunits, and the two central rings are each formed by seven beta subunits. The catalytic chamber with the active sites is on the inside of the barrel.

The protein resides in the cytoplasm. Its subcellular location is the nucleus. Its function is as follows. The proteasome is a multicatalytic proteinase complex which is characterized by its ability to cleave peptides with Arg, Phe, Tyr, Leu, and Glu adjacent to the leaving group at neutral or slightly basic pH. The proteasome has an ATP-dependent proteolytic activity. In Dictyostelium discoideum (Social amoeba), this protein is Proteasome subunit alpha type-7 (psmA7).